The chain runs to 331 residues: Probable endo-beta-1,4-glucanase B (331 aa).

Positions 1–18 (MKFQSTLLLAAAAGSALA) are cleaved as a signal peptide. 2 N-linked (GlcNAc...) asparagine glycosylation sites follow: Asn-38 and Asn-100. Catalysis depends on Glu-160, which acts as the Proton donor. N-linked (GlcNAc...) asparagine glycosylation occurs at Asn-211. Glu-266 functions as the Nucleophile in the catalytic mechanism. N-linked (GlcNAc...) asparagine glycosylation is present at Asn-288.

The protein belongs to the glycosyl hydrolase 5 (cellulase A) family.

The protein resides in the secreted. It catalyses the reaction Endohydrolysis of (1-&gt;4)-beta-D-glucosidic linkages in cellulose, lichenin and cereal beta-D-glucans.. Has endoglucanase activity on substrates containing beta-1,4 glycosidic bonds, like in carboxymethylcellulose (CMC), hydroxyethylcellulose (HEC) and beta-glucan. Involved in the degradation of complex natural cellulosic substrates. This chain is Probable endo-beta-1,4-glucanase B (eglB), found in Aspergillus niger (strain ATCC MYA-4892 / CBS 513.88 / FGSC A1513).